A 96-amino-acid chain; its full sequence is Large ribosomal subunit protein uL23 (96 aa).

This sequence belongs to the universal ribosomal protein uL23 family. In terms of assembly, part of the 50S ribosomal subunit. Contacts protein L29, and trigger factor when it is bound to the ribosome.

Its function is as follows. One of the early assembly proteins it binds 23S rRNA. One of the proteins that surrounds the polypeptide exit tunnel on the outside of the ribosome. Forms the main docking site for trigger factor binding to the ribosome. The polypeptide is Large ribosomal subunit protein uL23 (Finegoldia magna (strain ATCC 29328 / DSM 20472 / WAL 2508) (Peptostreptococcus magnus)).